We begin with the raw amino-acid sequence, 104 residues long: Flagellar hook-basal body complex protein FliE (104 aa).

This sequence belongs to the FliE family.

Its subcellular location is the bacterial flagellum basal body. This chain is Flagellar hook-basal body complex protein FliE, found in Serratia proteamaculans (strain 568).